Consider the following 152-residue polypeptide: MEQVRKLTGAALEAEGMDLVLAEFKREGGGYILRLYVDKEGGITLGDCTMVSRYVGDLLDAYADEMPRYRLEVSSPGLDRPLTREDHFRRFEGRTALIVTKEPREGRKKFRGVLSGALNGVITLVADEVPMEFALHEIESARLQYKHGESTC.

The protein belongs to the RimP family.

The protein resides in the cytoplasm. Its function is as follows. Required for maturation of 30S ribosomal subunits. The protein is Ribosome maturation factor RimP of Desulfatibacillum aliphaticivorans.